The following is a 181-amino-acid chain: Protein GrpE (181 aa).

Over residues 1 to 12 the composition is skewed to polar residues; that stretch reads MENTQENPTTPS. Positions 1–33 are disordered; it reads MENTQENPTTPSAEDIGSEKQAAQGAAPAAEAA. Residues 21–33 show a composition bias toward low complexity; it reads QAAQGAAPAAEAA.

Belongs to the GrpE family. In terms of assembly, homodimer.

The protein resides in the cytoplasm. Functionally, participates actively in the response to hyperosmotic and heat shock by preventing the aggregation of stress-denatured proteins, in association with DnaK and GrpE. It is the nucleotide exchange factor for DnaK and may function as a thermosensor. Unfolded proteins bind initially to DnaJ; upon interaction with the DnaJ-bound protein, DnaK hydrolyzes its bound ATP, resulting in the formation of a stable complex. GrpE releases ADP from DnaK; ATP binding to DnaK triggers the release of the substrate protein, thus completing the reaction cycle. Several rounds of ATP-dependent interactions between DnaJ, DnaK and GrpE are required for fully efficient folding. The protein is Protein GrpE of Burkholderia cenocepacia (strain HI2424).